The primary structure comprises 425 residues: Septin-7 (425 aa).

The Septin-type G domain occupies 28–297 (RGFEFTLMVV…ENYRSRKLAA (270 aa)). The G1 motif stretch occupies residues 38–45 (GESGLGKS). Residues 38-45 (GESGLGKS), Thr71, Gly97, 176-184 (KADTLTPEE), Gly231, and Arg246 each bind GTP. Residues 94–97 (DTPG) form a G3 motif region. The G4 motif stretch occupies residues 175–178 (AKAD). Positions 324-421 (LAQMEEERRE…SRTLEKNKKK (98 aa)) form a coiled coil.

It belongs to the TRAFAC class TrmE-Era-EngA-EngB-Septin-like GTPase superfamily. Septin GTPase family. Monomer, and homodimer. Nucleotide binding promotes oligomerization. Can form heterooligomers with other family members and form filaments.

Its subcellular location is the cytoplasm. The protein localises to the chromosome. The protein resides in the centromere. It localises to the kinetochore. It is found in the cytoskeleton. Its subcellular location is the spindle. The protein localises to the cleavage furrow. The protein resides in the midbody. It localises to the cilium axoneme. Filament-forming cytoskeletal GTPase. Required for normal organization of the actin cytoskeleton. Required for normal progress through mitosis. Involved in cytokinesis. Plays a role in ciliogenesis and collective cell movements including convergent extension during gastrulation. Controls cell elongation but not polarization during convergent extension. This is Septin-7 from Xenopus laevis (African clawed frog).